Reading from the N-terminus, the 574-residue chain is MESLCGVLGFLLLAAGLPLQAAKRFRDVLGHEQYPDHMREHNQLRGWSSDENEWDEHLYPVWRRGDGRWKDSWEGGRVQAVLTSDSPALVGSNITFVVNLVFPRCQKEDANGNIVYEKNCRNDLGLTSDLHVYNWTAGADDGDWEDGTSRSQHLRFPDRRPFPRPHGWKKWSFVYVFHTLGQYFQKLGRCSARVSINTVNLTAGPQVMEVTVFRRYGRAYIPISKVKDVYVITDQIPVFVTMSQKNDRNLSDEIFLRDLPIVFDVLIHDPSHFLNDSAISYKWNFGDNTGLFVSNNHTLNHTYVLNGTFNLNLTVQTAVPGPCPPPSPSTPPPPSTPPSPPPSPLPTLSTPSPSLMPTGYKSMELSDISNENCRINRYGYFRATITIVEGILEVSIMQIADVPMPTPQPANSLMDFTVTCKGATPMEACTIISDPTCQIAQNRVCSPVAVDGLCLLSVRRAFNGSGTYCVNFTLGDDASLALTSTLISIPGKDPDSPLRAVNGVLISIGCLAVLVTMVTILLYKKHKAYKPIGNCPRNTVKGKGLSVLLSHAKAPFFRGDQEKDPLLQDKPRTL.

The signal sequence occupies residues 1–22 (MESLCGVLGFLLLAAGLPLQAA). Topologically, residues 23-502 (KRFRDVLGHE…DPDSPLRAVN (480 aa)) are extracellular. 9 N-linked (GlcNAc...) asparagine glycosylation sites follow: Asn-93, Asn-134, Asn-200, Asn-249, Asn-275, Asn-296, Asn-300, Asn-306, and Asn-312. A PKD domain is found at 250 to 338 (LSDEIFLRDL…STPPPPSTPP (89 aa)). Positions 320–353 (PGPCPPPSPSTPPPPSTPPSPPPSPLPTLSTPSP) are disordered. Residues 321–345 (GPCPPPSPSTPPPPSTPPSPPPSPL) are compositionally biased toward pro residues. Residues Asn-463 and Asn-471 are each glycosylated (N-linked (GlcNAc...) asparagine). The chain crosses the membrane as a helical span at residues 503–523 (GVLISIGCLAVLVTMVTILLY). The Cytoplasmic segment spans residues 524–574 (KKHKAYKPIGNCPRNTVKGKGLSVLLSHAKAPFFRGDQEKDPLLQDKPRTL). Phosphoserine is present on Ser-546. The Cell attachment site signature appears at 558-560 (RGD).

It belongs to the PMEL/NMB family. In terms of tissue distribution, may be up-regulated in bone metastatic breast cancer cells.

It localises to the cell membrane. The protein resides in the melanosome membrane. Its subcellular location is the early endosome membrane. Functionally, could be a melanogenic enzyme. This chain is Transmembrane glycoprotein NMB (Gpnmb), found in Mus musculus (Mouse).